An 887-amino-acid polypeptide reads, in one-letter code: Beta-galactosidase 14 (887 aa).

Residues 1–31 (MSKSSRIRMKSRTRYLIAILLVISLCSKASS) form the signal peptide. E197 functions as the Proton donor in the catalytic mechanism. E268 acts as the Nucleophile in catalysis. N269, N300, N395, and N785 each carry an N-linked (GlcNAc...) asparagine glycan. The 87-residue stretch at 752-838 (KDMRLKAVMR…KTLAVQVKCE (87 aa)) folds into the SUEL-type lectin domain. Positions 838 to 852 (EKKEGKQDEKKKKED) are enriched in basic and acidic residues. Residues 838–887 (EKKEGKQDEKKKKEDKDEEEEDDEDDDEEEEEEDKENKDTKDMENKNQDM) form a disordered region. Positions 853–871 (KDEEEEDDEDDDEEEEEED) are enriched in acidic residues. Over residues 872-887 (KENKDTKDMENKNQDM) the composition is skewed to basic and acidic residues.

It belongs to the glycosyl hydrolase 35 family.

It is found in the secreted. The protein localises to the extracellular space. Its subcellular location is the apoplast. It catalyses the reaction Hydrolysis of terminal non-reducing beta-D-galactose residues in beta-D-galactosides.. The protein is Beta-galactosidase 14 (BGAL14) of Arabidopsis thaliana (Mouse-ear cress).